A 342-amino-acid polypeptide reads, in one-letter code: Serine/threonine-protein kinase-transforming protein mos (342 aa).

The Protein kinase domain occupies 63–338 (VCLMHRLGSG…LLQRDLKAFR (276 aa)). ATP is bound by residues 69–77 (LGSGGFGSV) and lysine 90. Aspartate 198 functions as the Proton acceptor in the catalytic mechanism.

It belongs to the protein kinase superfamily. Ser/Thr protein kinase family.

The enzyme catalyses L-seryl-[protein] + ATP = O-phospho-L-seryl-[protein] + ADP + H(+). It catalyses the reaction L-threonyl-[protein] + ATP = O-phospho-L-threonyl-[protein] + ADP + H(+). The chain is Serine/threonine-protein kinase-transforming protein mos (V-MOS) from Myeloproliferative sarcoma virus (isolate ts159).